The following is a 230-amino-acid chain: Sodium channel modifier 1 (230 aa).

Position 2 is a phosphoserine (serine 2). A Bipartite nuclear localization signal motif is present at residues 4-20; sequence KREGDDWSQLNVLKKRR. The Matrin-type zinc finger occupies 42-74; it reads FACAICPHRPVLDTLAMLTAHRAGKKHLSSLQL. A Glycyl lysine isopeptide (Lys-Gly) (interchain with G-Cter in SUMO2) cross-link involves residue lysine 67. Disordered regions lie at residues 76-106 and 129-191; these read YGKKPPGKGTEQNPRQHNELRREETTAEAPL and RRKY…RALD. Positions 89–100 are enriched in basic and acidic residues; sequence PRQHNELRREET. Positions 142-151 are enriched in pro residues; that stretch reads SRPPLPPPEV. A compositionally biased stretch (polar residues) spans 167-180; sequence GSQTKESATVSSPA. A phosphoserine mark is found at serine 183 and serine 219. Residues 188 to 230 are required for interaction with LUC7L2; sequence RALDHYLTLRSSGWIPDGRGRWIKDENVEFDSDEEEPPDLPLD.

In terms of assembly, component of the minor spliceosome. Within this complex, interacts with RNF113A, as well as with SF3B1/SF3b155, SF3B2/SF3b145, SF3B3/SF3b130 and CDC5L. May interact with LUC7L2 and SNRNP70.

It is found in the nucleus. The protein localises to the nucleoplasm. It localises to the nucleus speckle. As a component of the minor spliceosome, involved in the splicing of U12-type introns in pre-mRNAs. Plays a role in the regulation of primary cilia length and Hedgehog signaling. The polypeptide is Sodium channel modifier 1 (SCNM1) (Bos taurus (Bovine)).